We begin with the raw amino-acid sequence, 299 residues long: tRNA dimethylallyltransferase (299 aa).

11–18 (GPTAVGKT) is a binding site for ATP. 13–18 (TAVGKT) lines the substrate pocket. The interval 36–39 (DSQQ) is interaction with substrate tRNA.

It belongs to the IPP transferase family. Monomer. It depends on Mg(2+) as a cofactor.

The catalysed reaction is adenosine(37) in tRNA + dimethylallyl diphosphate = N(6)-dimethylallyladenosine(37) in tRNA + diphosphate. Catalyzes the transfer of a dimethylallyl group onto the adenine at position 37 in tRNAs that read codons beginning with uridine, leading to the formation of N6-(dimethylallyl)adenosine (i(6)A). This Streptococcus pyogenes serotype M28 (strain MGAS6180) protein is tRNA dimethylallyltransferase.